A 272-amino-acid chain; its full sequence is Hemin import ATP-binding protein HmuV (272 aa).

In terms of domain architecture, ABC transporter spans 2 to 255 (LNAEHLHVAR…DLIERCYGFR (254 aa)). 34–41 (GRNGAGKS) contributes to the ATP binding site.

It belongs to the ABC transporter superfamily. Heme (hemin) importer (TC 3.A.1.14.5) family. The complex is composed of two ATP-binding proteins (HmuV), two transmembrane proteins (HmuU) and a solute-binding protein (HmuT).

The protein localises to the cell inner membrane. In terms of biological role, part of the ABC transporter complex HmuTUV involved in hemin import. Responsible for energy coupling to the transport system. The protein is Hemin import ATP-binding protein HmuV of Burkholderia thailandensis (strain ATCC 700388 / DSM 13276 / CCUG 48851 / CIP 106301 / E264).